The primary structure comprises 457 residues: Multidrug resistance protein MdtK (457 aa).

12 helical membrane passes run 11–31, 53–73, 93–113, 127–147, 160–180, 188–208, 239–259, 277–297, 316–336, 357–377, 387–407, and 418–438; these read LLAL…MGFV, IWLP…PVIA, WLVA…GHII, AIGY…FQVL, GMVI…IFIY, LGGV…YLLM, IAIG…FAVV, ALNF…AATI, RTAI…TIVL, LMLL…GSGV, IFFI…YLLA, and PSGF…MMAL.

Belongs to the multi antimicrobial extrusion (MATE) (TC 2.A.66.1) family. MdtK subfamily.

The protein resides in the cell inner membrane. In terms of biological role, multidrug efflux pump that functions probably as a Na(+)/drug antiporter. This Edwardsiella ictaluri (strain 93-146) protein is Multidrug resistance protein MdtK.